The following is a 359-amino-acid chain: Mannose-1-phosphate guanylyltransferase (359 aa).

This sequence belongs to the transferase hexapeptide repeat family.

It carries out the reaction alpha-D-mannose 1-phosphate + GTP + H(+) = GDP-alpha-D-mannose + diphosphate. It functions in the pathway cell wall biogenesis. It participates in nucleotide-sugar biosynthesis; GDP-alpha-D-mannose biosynthesis; GDP-alpha-D-mannose from alpha-D-mannose 1-phosphate (GTP route): step 1/1. Catalyzes the formation of GDP-mannose from D-mannose-1-phosphate and GTP. Plays an important role in the synthesis of different glycoconjugates which are responsible for cell wall structure, virulence and immunomodulatory activity of M.tuberculosis. The chain is Mannose-1-phosphate guanylyltransferase from Mycobacterium tuberculosis (strain ATCC 25618 / H37Rv).